The sequence spans 365 residues: NADH-quinone oxidoreductase subunit 8 (365 aa).

The next 9 helical transmembrane spans lie at 11-31, 80-100, 120-140, 157-177, 192-212, 252-272, 273-293, 310-330, and 336-356; these read WMVA…FAFM, FLFV…FGLI, LGIL…FLSG, ASLI…VLLV, HGWL…ASMA, FITA…MPVL, EVPY…FIWI, WGFL…VVAL, and YLLY…LYTP.

The protein belongs to the complex I subunit 1 family. As to quaternary structure, NDH-1 is composed of 15 different subunits, Nqo1 to Nqo15. The complex has a L-shaped structure, with the hydrophobic arm (subunits Nqo7, Nqo8 and Nqo10 to Nqo14) embedded in the membrane and the hydrophilic peripheral arm (subunits Nqo1 to Nqo6, Nqo9 and Nqo15) protruding into the bacterial cytoplasm. The hydrophilic domain contains all the redox centers.

The protein resides in the cell inner membrane. The enzyme catalyses a quinone + NADH + 5 H(+)(in) = a quinol + NAD(+) + 4 H(+)(out). In terms of biological role, NDH-1 shuttles electrons from NADH, via FMN and iron-sulfur (Fe-S) centers, to quinones in the respiratory chain. The immediate electron acceptor for the enzyme in this species is menaquinone. Couples the redox reaction to proton translocation (for every two electrons transferred, four hydrogen ions are translocated across the cytoplasmic membrane), and thus conserves the redox energy in a proton gradient required for the synthesis of ATP. The polypeptide is NADH-quinone oxidoreductase subunit 8 (nqo8) (Thermus thermophilus (strain ATCC 27634 / DSM 579 / HB8)).